Here is a 312-residue protein sequence, read N- to C-terminus: Pantothenate kinase (312 aa).

Position 97-104 (97-104 (GSVAVGKS)) interacts with ATP.

It belongs to the prokaryotic pantothenate kinase family.

The protein localises to the cytoplasm. It carries out the reaction (R)-pantothenate + ATP = (R)-4'-phosphopantothenate + ADP + H(+). It functions in the pathway cofactor biosynthesis; coenzyme A biosynthesis; CoA from (R)-pantothenate: step 1/5. This is Pantothenate kinase from Corynebacterium glutamicum (strain ATCC 13032 / DSM 20300 / JCM 1318 / BCRC 11384 / CCUG 27702 / LMG 3730 / NBRC 12168 / NCIMB 10025 / NRRL B-2784 / 534).